Consider the following 193-residue polypeptide: GTP cyclohydrolase 1 (193 aa).

3 residues coordinate Zn(2+): cysteine 73, histidine 76, and cysteine 144.

This sequence belongs to the GTP cyclohydrolase I family. Homomer.

The enzyme catalyses GTP + H2O = 7,8-dihydroneopterin 3'-triphosphate + formate + H(+). The protein operates within cofactor biosynthesis; 7,8-dihydroneopterin triphosphate biosynthesis; 7,8-dihydroneopterin triphosphate from GTP: step 1/1. The polypeptide is GTP cyclohydrolase 1 (Hyperthermus butylicus (strain DSM 5456 / JCM 9403 / PLM1-5)).